Here is a 2179-residue protein sequence, read N- to C-terminus: Probable inactive serine/threonine-protein kinase lvsG (2179 aa).

Positions 100–167 (DHDLNKNKNN…TSISLNDLNS (68 aa)) are disordered. Composition is skewed to low complexity over residues 106-121 (NKNN…NNSG) and 141-159 (LSPS…LSTS). The stretch at 216 to 256 (LYERSLKTSQQQQQQQQQQFKFQPNETLSLWEYFDEINSPP) is one WD 1 repeat. Disordered stretches follow at residues 281–300 (LDNK…NSQS), 523–556 (DNDN…TVGW), 589–621 (DSMG…NSGK), 778–801 (KSLK…QPQF), 844–959 (NNHH…NKPS), 1033–1055 (AQQQ…SKQL), 1079–1153 (GISK…STTD), 1339–1362 (NHSN…KNGS), and 1785–1807 (TTTT…PNSL). The BEACH domain maps to 463-801 (YHQPLENQFE…QQQTQQQPQF (339 aa)). Low complexity predominate over residues 534 to 548 (NSSSSNNNNNNNNED). Over residues 590–602 (SMGGGIGSIGSTG) the composition is skewed to gly residues. Low complexity-rich tracts occupy residues 783-800 (QRQQ…QQPQ), 853-943 (NSNI…GVNN), 1033-1047 (AQQQ…QQQA), and 1084-1098 (TTNA…TNSN). Positions 1021–1049 (LQQQLQQQQQQQAQQQQSQQQSQQQQANS) form a coiled coil. Positions 1064-1400 (ESMIKKYSNG…VNELLSSSLF (337 aa)) constitute a Protein kinase domain. The segment covering 1099–1122 (MGDSIGNNITSPPSPTSLKDSSSI) has biased composition (polar residues). Low complexity predominate over residues 1123–1134 (QQQQQQQQQQQQ). A compositionally biased stretch (polar residues) spans 1135 to 1153 (NSESTRPITPPNVSNSTTD). Composition is skewed to low complexity over residues 1339–1360 (NHSN…NNKN) and 1785–1801 (TTTT…NNNN). 6 WD repeats span residues 1864-1903 (EHNA…SLTT), 1906-1942 (QHMH…KVNV), 1945-1983 (EPTG…LTHE), 2007-2048 (SNSN…ILEQ), 2052-2089 (HHDS…PIIS), and 2149-2179 (PKQS…KICQ).

This sequence belongs to the protein kinase superfamily. Ser/Thr protein kinase family.

The protein is Probable inactive serine/threonine-protein kinase lvsG (lvsG) of Dictyostelium discoideum (Social amoeba).